The primary structure comprises 268 residues: Zwei Ig domain protein zig-8 (268 aa).

An N-terminal signal peptide occupies residues 1–21 (MRRFSNICVILFSFLYATGHG). 2 Ig-like C2-type domains span residues 40-128 (PSQT…NTVY) and 140-251 (PSPS…NSAT). Residues Cys-57 and Cys-118 are joined by a disulfide bond. 4 N-linked (GlcNAc...) asparagine glycosylation sites follow: Asn-82, Asn-155, Asn-164, and Asn-191. Cys-165 and Cys-226 form a disulfide bridge.

In terms of tissue distribution, expressed in PVT neurons and pharyngeal muscles.

Its subcellular location is the secreted. In terms of biological role, together with zig-5, required postembryonically to maintain the position of ASI and ASH head neuron cell bodies and ventral nerve cord axons of PVQ, PVP and HSN neurons by preventing their displacement that could occur during body growth and movement. May act by reducing L1CAM-like protein sax-7 (long isoform) adhesion. This Caenorhabditis elegans protein is Zwei Ig domain protein zig-8.